Reading from the N-terminus, the 642-residue chain is MPIITLPDGSQRQFDNPVSTMDVALSIGPGLAKATIAGRVNGQRVDACDLIEEDASLEIITTKDEVDGLEIVRHSCAHLLGHALKQLYPNAKMAIGPTIDNGFYYDIDLEESLTQEDLEKIEARMKALAKTKYQVIKKKVSWQEARDAFEARGETYKMEILDENVSRDDRPGLYHHEEYIDMCRGPHVPNMSFCQHFTLLNVAGAYWRGNSDNKMLQRIYGTAFHDKKALKDHLTRLEEAAKRDHRKIGKQLDLFHMQQEAPGMVFWHHNGWSVFRDLEVFIREKLTEYGYQEVKGPLMMDRVLWERSGHWDKYADAMFTTSSENREYAIKPMNCPGHVQIFNQGLKSYRDLPLRMAEFGSCHRNEPSGALHGIMRVRGFTQDDAHIFCTESQIQDEVTNCIKMVYDTYQTFGFDNIAVKLSTRPEQRVGSDEIWDQSEEALKQALESMDIAYEIQEGEGAFYGPKIEFTLFDCLGRAWQCGTVQLDFNLPNRLGATYVGENNERLVPVMIHRAILGSLERFIGILIEEYAGFFPTWLAPEQAVIMNITDKQADYVQEIAQKLQKCGIRAKADLRNEKIGFKIREHTLKRVPFMLVCGDQEMEAGEIAVRTRKGNDLGKFKVDDFVSYIQDQIASRKLNLEE.

Positions 1 to 61 constitute a TGS domain; that stretch reads MPIITLPDGS…EEDASLEIIT (61 aa). The segment at 244 to 535 is catalytic; the sequence is DHRKIGKQLD…LIEEYAGFFP (292 aa). Residues Cys-335, His-386, and His-512 each coordinate Zn(2+).

Belongs to the class-II aminoacyl-tRNA synthetase family. As to quaternary structure, homodimer. Zn(2+) serves as cofactor.

The protein localises to the cytoplasm. The enzyme catalyses tRNA(Thr) + L-threonine + ATP = L-threonyl-tRNA(Thr) + AMP + diphosphate + H(+). Catalyzes the attachment of threonine to tRNA(Thr) in a two-step reaction: L-threonine is first activated by ATP to form Thr-AMP and then transferred to the acceptor end of tRNA(Thr). Also edits incorrectly charged L-seryl-tRNA(Thr). This Vibrio vulnificus (strain CMCP6) protein is Threonine--tRNA ligase.